We begin with the raw amino-acid sequence, 600 residues long: MATLRISSALIYQNTLTHHFRLRRPHRFVCKSMTKTTPDTTLVELSRRSGNYQPSPWNHCYLLSIENKYASETEVITRDVLKKKVKSMLDDEKKSRLEQLELIDDLQKLGVSYHFEIEINDTLTDLHLKMGRNCWKCDKEEDLHATSLEFRLLRQHGFDVSENIFDVIIDQIESNTFKTNNINGIISLYEASYLSTKSDTKLHKVIRPFATEQIRKFVDDEDTKNIEVREKAYHALEMPYHWRMRRLDTRWYIDAYEKKHDMNLVLIEFAKIDFNIVQAAHQEDLKYVSRWWKDTCLTNQLPFVRDRIVENYFWTVGLIYEPQFGYIRRIMTIVNALVTTIDDIYDIYGTLEELELFTSMVENWDVNRLGELPEYMRLCFLILYNEINGIGCDILKYKKIDVIPYLKKSWADLCRTYLVEAKWYKRGYKPSLEEYMQNAWISISAPTILIHFYCVFSDQISVQNLETLSQHRQHIVRCSATVLRLANDLGTSPTELARGDVLKSVQCYMHETGASEERARDHVHQMISDMWDDMNSETKTACNSSSRSRGFKEAAMNLARMSQCMYQYGDGHGCPEKAKTIDRVQSLLVDPIPLDVNRLG.

The transit peptide at 1 to 31 (MATLRISSALIYQNTLTHHFRLRRPHRFVCK) directs the protein to the chloroplast. A dimethylallyl diphosphate-binding site is contributed by Asp342. Residues Asp342 and Asp346 each coordinate Mg(2+). A DDXXD motif motif is present at residues 342-346 (DDIYD). Dimethylallyl diphosphate is bound by residues Glu420, Arg484, and Asn487. 3 residues coordinate Mg(2+): Asn487, Thr491, and Glu495.

The protein belongs to the terpene synthase family. Tpsb subfamily. The cofactor is Mg(2+). Requires Mn(2+) as cofactor. Predominantly expressed in roots and at much lower levels in siliques. Not found in leaves, flowers or stems. Also detected in flowers in cv. Landsberg erecta. Not expressed in root apical meristem and elongation zone. Found in the vascular system of young roots and additionally in the cortex and epidermal cell layer of older roots.

Its subcellular location is the plastid. The protein resides in the chloroplast. It catalyses the reaction (2E)-geranyl diphosphate + H2O = 1,8-cineole + diphosphate. It functions in the pathway secondary metabolite biosynthesis; terpenoid biosynthesis. In terms of biological role, involved in monoterpene (C10) biosynthesis. The major product is 1,8-cineole (52%) followed by minor amounts of sabinene (14.5%), myrcene (13.3%), (-)-(1S)-beta-pinene (7.8%), (-)-(4S)-limonene (4.0%), (E)-beta-ocimene (2.7%), alpha-terpineol (2.4%), (-)-(1S)-alpha-pinene (1.9%), terpinolene (0.8%), and (+)-alpha-thujene (0.6%). This chain is 1,8-cineole synthase 1, chloroplastic (TPS27), found in Arabidopsis thaliana (Mouse-ear cress).